A 591-amino-acid polypeptide reads, in one-letter code: PDZ and LIM domain protein 5 (591 aa).

Ser-2 carries the N-acetylserine modification. Ser-2 carries the phosphoserine modification. The 84-residue stretch at 2-85 folds into the PDZ domain; the sequence is SNYNVSLVGP…SLNMTLQRAS (84 aa). Position 89 is an N6-acetyllysine; alternate (Lys-89). Lys-89 carries the post-translational modification N6-succinyllysine; alternate. A Glycyl lysine isopeptide (Lys-Gly) (interchain with G-Cter in SUMO2); alternate cross-link involves residue Lys-89. Residues Ser-111, Ser-134, and Ser-137 each carry the phosphoserine modification. 2 disordered regions span residues 125–240 and 255–334; these read YNKV…GPPR and THSD…SNRP. Residues 134–143 show a composition bias toward polar residues; the sequence is SVSSPKVTSI. Residues 144 to 161 are compositionally biased toward low complexity; sequence PSPSSAFTPAHAATSSHA. Residues 162-174 are compositionally biased toward pro residues; the sequence is SPPPVAAVTPPPL. Composition is skewed to polar residues over residues 183 to 195 and 207 to 217; these read ANPS…SPPN and PTVTSVCSESA. Phosphoserine occurs at positions 228 and 260. Composition is skewed to basic and acidic residues over residues 258–273 and 293–304; these read DASK…DWRP and EHLKESENDNAK. The segment covering 310–329 has biased composition (low complexity); sequence PEPSQQSASPLSAAESLESP. Phosphoserine occurs at positions 313 and 318. Position 346 is an N6-acetyllysine (Lys-346). The tract at residues 348–398 is disordered; sequence VGSTSVKSPSWQRPNQAAPSTGRISNSASSSGTGAPMKPAVGPPQPSDQDT. The segment covering 349–380 has biased composition (polar residues); that stretch reads GSTSVKSPSWQRPNQAAPSTGRISNSASSSGT. Phosphoserine is present on residues Ser-355 and Ser-357. 3 LIM zinc-binding domains span residues 413 to 472, 472 to 531, and 531 to 591; these read PMCA…FFAP, PECG…LFGT, and TICR…SVNF.

Interacts with various PKC isoforms through the LIM domains. Interacts with actin and alpha-actinin through the PDZ domain. Interacts (via LIM domains) with SIPA1L1/SPAR; this interaction may occur preferentially with isoform 1. In terms of tissue distribution, detected in brain, in neurons, including in hippocampal neurons, and glial cells (at protein level). Detected in heart and skeletal muscle.

The protein localises to the postsynaptic density. The protein resides in the presynapse. It is found in the postsynapse. Its subcellular location is the cytoplasm. It localises to the cytosol. Functionally, may play an important role in the heart development by scaffolding PKC to the Z-disk region. May play a role in the regulation of cardiomyocyte expansion. Isoforms lacking the LIM domains may negatively modulate the scaffolding activity of isoform 1. Overexpression promotes the development of heart hypertrophy. Contributes to the regulation of dendritic spine morphogenesis in neurons. May be required to restrain postsynaptic growth of excitatory synapses. Isoform 1, but not isoform 2, expression favors spine thinning and elongation. The chain is PDZ and LIM domain protein 5 (Pdlim5) from Rattus norvegicus (Rat).